The primary structure comprises 491 residues: HEPACAM family member 2 (491 aa).

Residues 1–18 (MWLRVFTAFLSFTAGACS) form the signal peptide. Residues Asn73, Asn117, and Asn153 are each glycosylated (N-linked (GlcNAc...) asparagine). Ig-like C2-type domains follow at residues 137 to 221 (PVVQ…SDII) and 223 to 319 (PTIY…THFT). Cystine bridges form between Cys158–Cys207 and Cys258–Cys303. An N-linked (GlcNAc...) asparagine glycan is attached at Asn308. Residues 340–360 (LASITGISLFLIISMCLLFLW) traverse the membrane as a helical segment. Residues 361–491 (KKFQPYKVIK…GKHSRAKQCI (131 aa)) are Cytoplasmic-facing. The span at 444-454 (QQQDHPESSSQ) shows a compositional bias: polar residues. 2 disordered regions span residues 444 to 466 (QQQD…DRHD) and 472 to 491 (ELGH…KQCI). The span at 472–482 (ELGHCKEQDKG) shows a compositional bias: basic and acidic residues.

Poly-ADP-ribosylated (PARsylated) by tankyrase TNKS during late G2 and prophase, leading to translocation to mitotic centrosomes. In terms of processing, N-glycosylated.

The protein localises to the golgi apparatus membrane. It is found in the cytoplasm. Its subcellular location is the cytoskeleton. The protein resides in the spindle. It localises to the microtubule organizing center. The protein localises to the centrosome. It is found in the midbody. Its function is as follows. Required during prometaphase for centrosome maturation. Following poly-ADP-ribosylation (PARsylation) by TNKS, translocates from the Golgi apparatus to mitotic centrosomes and plays a key role in the formation of robust microtubules for prompt movement of chromosomes: anchors AKAP9/CG-NAP, a scaffold protein of the gamma-tubulin ring complex and promotes centrosome maturation. This Bos taurus (Bovine) protein is HEPACAM family member 2 (HEPACAM2).